We begin with the raw amino-acid sequence, 89 residues long: Small ribosomal subunit protein uS14 (89 aa).

This sequence belongs to the universal ribosomal protein uS14 family. As to quaternary structure, part of the 30S ribosomal subunit. Contacts proteins S3 and S10.

Functionally, binds 16S rRNA, required for the assembly of 30S particles and may also be responsible for determining the conformation of the 16S rRNA at the A site. This is Small ribosomal subunit protein uS14 from Aster yellows witches'-broom phytoplasma (strain AYWB).